The chain runs to 363 residues: Ferrochelatase (363 aa).

Residues His-209 and Glu-290 each coordinate Fe cation.

It belongs to the ferrochelatase family.

The protein resides in the cytoplasm. It carries out the reaction heme b + 2 H(+) = protoporphyrin IX + Fe(2+). It participates in porphyrin-containing compound metabolism; protoheme biosynthesis; protoheme from protoporphyrin-IX: step 1/1. Functionally, catalyzes the ferrous insertion into protoporphyrin IX. The sequence is that of Ferrochelatase from Methylibium petroleiphilum (strain ATCC BAA-1232 / LMG 22953 / PM1).